The sequence spans 381 residues: Homoserine O-succinyltransferase (381 aa).

Residues 45 to 360 form the AB hydrolase-1 domain; it reads NAVLVCHALN…PHGHDAFLLD (316 aa). The Nucleophile role is filled by serine 151. A substrate-binding site is contributed by arginine 221. Residues aspartate 321 and histidine 354 contribute to the active site. Aspartate 355 is a binding site for substrate.

It belongs to the AB hydrolase superfamily. MetX family. As to quaternary structure, homodimer.

The protein localises to the cytoplasm. It carries out the reaction L-homoserine + succinyl-CoA = O-succinyl-L-homoserine + CoA. It participates in amino-acid biosynthesis; L-methionine biosynthesis via de novo pathway; O-succinyl-L-homoserine from L-homoserine: step 1/1. Transfers a succinyl group from succinyl-CoA to L-homoserine, forming succinyl-L-homoserine. This is Homoserine O-succinyltransferase from Burkholderia lata (strain ATCC 17760 / DSM 23089 / LMG 22485 / NCIMB 9086 / R18194 / 383).